We begin with the raw amino-acid sequence, 163 residues long: Large ribosomal subunit protein uL15 (163 aa).

A compositionally biased stretch (basic residues) spans 1-29 (MSKKRRQRGSRTHGGGSHKNRRGAGHRGG). 2 disordered regions span residues 1 to 59 (MSKK…KTRR) and 135 to 163 (VADG…DEES). Basic and acidic residues-rich tracts occupy residues 33-46 (AGRD…HEPL) and 142-154 (LSER…AEKD).

It belongs to the universal ribosomal protein uL15 family. As to quaternary structure, part of the 50S ribosomal subunit.

Binds to the 23S rRNA. The polypeptide is Large ribosomal subunit protein uL15 (Natronomonas pharaonis (strain ATCC 35678 / DSM 2160 / CIP 103997 / JCM 8858 / NBRC 14720 / NCIMB 2260 / Gabara) (Halobacterium pharaonis)).